Reading from the N-terminus, the 458-residue chain is Glycogen synthase (458 aa).

Lys15 serves as a coordination point for ADP-alpha-D-glucose.

Belongs to the glycosyltransferase 1 family. Bacterial/plant glycogen synthase subfamily.

It carries out the reaction [(1-&gt;4)-alpha-D-glucosyl](n) + ADP-alpha-D-glucose = [(1-&gt;4)-alpha-D-glucosyl](n+1) + ADP + H(+). It functions in the pathway glycan biosynthesis; glycogen biosynthesis. In terms of biological role, synthesizes alpha-1,4-glucan chains using ADP-glucose. This Gloeobacter violaceus (strain ATCC 29082 / PCC 7421) protein is Glycogen synthase.